Reading from the N-terminus, the 274-residue chain is Diaminopimelate epimerase (274 aa).

Residues N11, Q44, and N64 each coordinate substrate. Catalysis depends on C73, which acts as the Proton donor. Substrate-binding positions include 74–75, N157, N190, and 208–209; these read GN and ER. The active-site Proton acceptor is C217. 218–219 contributes to the substrate binding site; that stretch reads GS.

It belongs to the diaminopimelate epimerase family. Homodimer.

It is found in the cytoplasm. It catalyses the reaction (2S,6S)-2,6-diaminopimelate = meso-2,6-diaminopimelate. It participates in amino-acid biosynthesis; L-lysine biosynthesis via DAP pathway; DL-2,6-diaminopimelate from LL-2,6-diaminopimelate: step 1/1. Functionally, catalyzes the stereoinversion of LL-2,6-diaminopimelate (L,L-DAP) to meso-diaminopimelate (meso-DAP), a precursor of L-lysine and an essential component of the bacterial peptidoglycan. The chain is Diaminopimelate epimerase from Serratia proteamaculans (strain 568).